Here is a 90-residue protein sequence, read N- to C-terminus: Conotoxin Mr22.1 (90 aa).

Positions 1-18 are cleaved as a signal peptide; the sequence is MMTRVFFAMFFLMALTEG. A propeptide spanning residues 19–49 is cleaved from the precursor; the sequence is WPRLYDSDCVRGRNMHITCFKDQTCGLTVKR. Residue tryptophan 75 is modified to 6'-bromotryptophan.

The protein belongs to the E superfamily. Contains 4 disulfide bonds. In terms of tissue distribution, expressed by the venom duct.

It is found in the secreted. The chain is Conotoxin Mr22.1 from Conus marmoreus (Marble cone).